Consider the following 407-residue polypeptide: Phosphopentomutase (407 aa).

6 residues coordinate Mn(2+): Asp10, Asp306, His311, Asp347, His348, and His359.

Belongs to the phosphopentomutase family. It depends on Mn(2+) as a cofactor.

The protein resides in the cytoplasm. It carries out the reaction 2-deoxy-alpha-D-ribose 1-phosphate = 2-deoxy-D-ribose 5-phosphate. It catalyses the reaction alpha-D-ribose 1-phosphate = D-ribose 5-phosphate. The protein operates within carbohydrate degradation; 2-deoxy-D-ribose 1-phosphate degradation; D-glyceraldehyde 3-phosphate and acetaldehyde from 2-deoxy-alpha-D-ribose 1-phosphate: step 1/2. Its function is as follows. Isomerase that catalyzes the conversion of deoxy-ribose 1-phosphate (dRib-1-P) and ribose 1-phosphate (Rib-1-P) to deoxy-ribose 5-phosphate (dRib-5-P) and ribose 5-phosphate (Rib-5-P), respectively. The protein is Phosphopentomutase of Yersinia pestis bv. Antiqua (strain Angola).